Consider the following 283-residue polypeptide: Protein/nucleic acid deglycase HchA (283 aa).

Zn(2+) is bound by residues H86, E91, and H123. C185 functions as the Nucleophile in the catalytic mechanism.

It belongs to the peptidase C56 family. HchA subfamily. Homodimer.

The protein resides in the cytoplasm. It carries out the reaction N(omega)-(1-hydroxy-2-oxopropyl)-L-arginyl-[protein] + H2O = lactate + L-arginyl-[protein] + H(+). It catalyses the reaction N(6)-(1-hydroxy-2-oxopropyl)-L-lysyl-[protein] + H2O = lactate + L-lysyl-[protein] + H(+). The enzyme catalyses S-(1-hydroxy-2-oxopropyl)-L-cysteinyl-[protein] + H2O = lactate + L-cysteinyl-[protein] + H(+). The catalysed reaction is N(omega)-(1-hydroxy-2-oxoethyl)-L-arginyl-[protein] + H2O = L-arginyl-[protein] + glycolate + H(+). It carries out the reaction N(6)-(1-hydroxy-2-oxoethyl)-L-lysyl-[protein] + H2O = glycolate + L-lysyl-[protein] + H(+). It catalyses the reaction S-(1-hydroxy-2-oxoethyl)-L-cysteinyl-[protein] + H2O = glycolate + L-cysteinyl-[protein] + H(+). The enzyme catalyses N(2)-(1-hydroxy-2-oxopropyl)-dGTP + H2O = lactate + dGTP + H(+). The catalysed reaction is N(2)-(1-hydroxy-2-oxopropyl)-GTP + H2O = lactate + GTP + H(+). It carries out the reaction N(2)-(1-hydroxy-2-oxopropyl)-GDP + H2O = lactate + GDP + H(+). It catalyses the reaction N(2)-(1-hydroxy-2-oxopropyl)-GMP + H2O = lactate + GMP + H(+). The enzyme catalyses N(2)-(1-hydroxy-2-oxoethyl)-dGTP + H2O = dGTP + glycolate + H(+). The catalysed reaction is N(2)-(1-hydroxy-2-oxoethyl)-GTP + H2O = glycolate + GTP + H(+). It carries out the reaction N(2)-(1-hydroxy-2-oxoethyl)-GDP + H2O = glycolate + GDP + H(+). It catalyses the reaction N(2)-(1-hydroxy-2-oxoethyl)-GMP + H2O = glycolate + GMP + H(+). The enzyme catalyses an N(2)-(1-hydroxy-2-oxopropyl)-guanosine in RNA + H2O = a guanosine in RNA + lactate + H(+). The catalysed reaction is an N(2)-(1-hydroxy-2-oxopropyl)-2'-deoxyguanosine in DNA + H2O = a 2'-deoxyguanosine in DNA + lactate + H(+). It carries out the reaction an N(2)-(1-hydroxy-2-oxoethyl)-guanosine in RNA + H2O = a guanosine in RNA + glycolate + H(+). It catalyses the reaction an N(2)-(1-hydroxy-2-oxoethyl)-2'-deoxyguanosine in DNA + H2O = a 2'-deoxyguanosine in DNA + glycolate + H(+). Functionally, protein and nucleotide deglycase that catalyzes the deglycation of the Maillard adducts formed between amino groups of proteins or nucleotides and reactive carbonyl groups of glyoxals. Thus, functions as a protein deglycase that repairs methylglyoxal- and glyoxal-glycated proteins, and releases repaired proteins and lactate or glycolate, respectively. Deglycates cysteine, arginine and lysine residues in proteins, and thus reactivates these proteins by reversing glycation by glyoxals. Acts on early glycation intermediates (hemithioacetals and aminocarbinols), preventing the formation of Schiff bases and advanced glycation endproducts (AGE). Also functions as a nucleotide deglycase able to repair glycated guanine in the free nucleotide pool (GTP, GDP, GMP, dGTP) and in DNA and RNA. Is thus involved in a major nucleotide repair system named guanine glycation repair (GG repair), dedicated to reversing methylglyoxal and glyoxal damage via nucleotide sanitization and direct nucleic acid repair. Plays an important role in protecting cells from carbonyl stress. The protein is Protein/nucleic acid deglycase HchA of Escherichia coli O81 (strain ED1a).